Consider the following 338-residue polypeptide: Anthranilate phosphoribosyltransferase (338 aa).

5-phospho-alpha-D-ribose 1-diphosphate contacts are provided by residues G81, 84 to 85, S89, 91 to 94, 109 to 117, and A121; these read GD, NVST, and KHGNRALSS. G81 is a binding site for anthranilate. Mg(2+) is bound at residue S93. Residue N112 coordinates anthranilate. Residue R167 participates in anthranilate binding. Mg(2+) contacts are provided by D226 and E227.

It belongs to the anthranilate phosphoribosyltransferase family. In terms of assembly, homodimer. The cofactor is Mg(2+).

The catalysed reaction is N-(5-phospho-beta-D-ribosyl)anthranilate + diphosphate = 5-phospho-alpha-D-ribose 1-diphosphate + anthranilate. Its pathway is amino-acid biosynthesis; L-tryptophan biosynthesis; L-tryptophan from chorismate: step 2/5. Functionally, catalyzes the transfer of the phosphoribosyl group of 5-phosphorylribose-1-pyrophosphate (PRPP) to anthranilate to yield N-(5'-phosphoribosyl)-anthranilate (PRA). The polypeptide is Anthranilate phosphoribosyltransferase (Rhodopseudomonas palustris (strain TIE-1)).